Here is a 416-residue protein sequence, read N- to C-terminus: UDP-N-acetylglucosamine 1-carboxyvinyltransferase (416 aa).

Lysine 22 to asparagine 23 is a binding site for phosphoenolpyruvate. A UDP-N-acetyl-alpha-D-glucosamine-binding site is contributed by arginine 91. Cysteine 115 acts as the Proton donor in catalysis. The residue at position 115 (cysteine 115) is a 2-(S-cysteinyl)pyruvic acid O-phosphothioketal. 2 residues coordinate UDP-N-acetyl-alpha-D-glucosamine: aspartate 304 and isoleucine 326.

The protein belongs to the EPSP synthase family. MurA subfamily.

It is found in the cytoplasm. It catalyses the reaction phosphoenolpyruvate + UDP-N-acetyl-alpha-D-glucosamine = UDP-N-acetyl-3-O-(1-carboxyvinyl)-alpha-D-glucosamine + phosphate. It functions in the pathway cell wall biogenesis; peptidoglycan biosynthesis. Cell wall formation. Adds enolpyruvyl to UDP-N-acetylglucosamine. The polypeptide is UDP-N-acetylglucosamine 1-carboxyvinyltransferase (Thermodesulfovibrio yellowstonii (strain ATCC 51303 / DSM 11347 / YP87)).